The chain runs to 1202 residues: Probable DNA polymerase (1202 aa).

Belongs to the DNA polymerase type-B family.

The protein resides in the mitochondrion. The enzyme catalyses DNA(n) + a 2'-deoxyribonucleoside 5'-triphosphate = DNA(n+1) + diphosphate. The protein is Probable DNA polymerase of Ascobolus immersus.